A 248-amino-acid polypeptide reads, in one-letter code: Probable transcriptional regulatory protein PSPPH_3775 (248 aa).

It belongs to the TACO1 family.

It localises to the cytoplasm. The chain is Probable transcriptional regulatory protein PSPPH_3775 from Pseudomonas savastanoi pv. phaseolicola (strain 1448A / Race 6) (Pseudomonas syringae pv. phaseolicola (strain 1448A / Race 6)).